Reading from the N-terminus, the 180-residue chain is Hypoxanthine-guanine phosphoribosyltransferase (180 aa).

2 residues coordinate diphosphate: Lys43 and Gly44. Positions 99 and 100 each coordinate Mg(2+). Asp103 acts as the Proton acceptor in catalysis. GMP contacts are provided by residues Lys131, 152 to 153 (FI), and Asp159. Residue Arg165 participates in diphosphate binding.

Belongs to the purine/pyrimidine phosphoribosyltransferase family. The cofactor is Mg(2+).

The protein resides in the cytoplasm. It catalyses the reaction IMP + diphosphate = hypoxanthine + 5-phospho-alpha-D-ribose 1-diphosphate. The enzyme catalyses GMP + diphosphate = guanine + 5-phospho-alpha-D-ribose 1-diphosphate. It participates in purine metabolism; IMP biosynthesis via salvage pathway; IMP from hypoxanthine: step 1/1. The protein operates within purine metabolism; GMP biosynthesis via salvage pathway; GMP from guanine: step 1/1. Its function is as follows. Purine salvage pathway enzyme that catalyzes the transfer of the ribosyl-5-phosphate group from 5-phospho-alpha-D-ribose 1-diphosphate (PRPP) to the N9 position of the 6-oxopurines hypoxanthine and guanine to form the corresponding ribonucleotides IMP (inosine 5'-monophosphate) and GMP (guanosine 5'-monophosphate), with the release of PPi. The sequence is that of Hypoxanthine-guanine phosphoribosyltransferase (hpt) from Streptococcus thermophilus (strain CNRZ 1066).